Consider the following 341-residue polypeptide: ATPase GET3 (341 aa).

34 to 41 (KGGVGKTT) contacts ATP. The active site involves aspartate 63. Residues glutamate 245 and asparagine 272 each coordinate ATP. Zn(2+) is bound by residues cysteine 283 and cysteine 286.

The protein belongs to the arsA ATPase family. Homodimer.

It is found in the cytoplasm. The protein resides in the endoplasmic reticulum. Its function is as follows. ATPase required for the post-translational delivery of tail-anchored (TA) proteins to the endoplasmic reticulum. Recognizes and selectively binds the transmembrane domain of TA proteins in the cytosol. This complex then targets to the endoplasmic reticulum by membrane-bound receptors, where the tail-anchored protein is released for insertion. This process is regulated by ATP binding and hydrolysis. ATP binding drives the homodimer towards the closed dimer state, facilitating recognition of newly synthesized TA membrane proteins. ATP hydrolysis is required for insertion. Subsequently, the homodimer reverts towards the open dimer state, lowering its affinity for the membrane-bound receptor, and returning it to the cytosol to initiate a new round of targeting. The protein is ATPase GET3 of Paracoccidioides brasiliensis (strain Pb18).